The primary structure comprises 61 residues: Sec-independent protein translocase protein TatA (61 aa).

The helical transmembrane segment at 2-22 (GLSGISPLSLLLILAIIVALF) threads the bilayer.

This sequence belongs to the TatA/E family. As to quaternary structure, the Tat system comprises two distinct complexes: a TatABC complex, containing multiple copies of TatA, TatB and TatC subunits, and a separate TatA complex, containing only TatA subunits. Substrates initially bind to the TatABC complex, which probably triggers association of the separate TatA complex to form the active translocon.

It localises to the cell inner membrane. Functionally, part of the twin-arginine translocation (Tat) system that transports large folded proteins containing a characteristic twin-arginine motif in their signal peptide across membranes. TatA could form the protein-conducting channel of the Tat system. This Legionella pneumophila (strain Paris) protein is Sec-independent protein translocase protein TatA.